A 601-amino-acid chain; its full sequence is Polypeptide N-acetylgalactosaminyltransferase 11 (601 aa).

Over 1 to 7 (MGSAALR) the chain is Cytoplasmic. Residues 8-28 (CFCYGCLFTSVTWTLLLFIYF) form a helical; Signal-anchor for type II membrane protein membrane-spanning segment. N-linked (GlcNAc...) asparagine glycosylation is found at Asn29 and Asn202. At 29-601 (NFSEESQGFR…SPSQQWHLEN (573 aa)) the chain is on the lumenal side. Residues 143-254 (LPMASIVICF…EMWLQPLLAP (112 aa)) are catalytic subdomain A. The catalytic subdomain B stretch occupies residues 312–374 (PFRSPTMAGG…PCSRVGHIFR (63 aa)). In terms of domain architecture, Ricin B-type lectin spans 469–600 (RPKILQRGRL…GSPSQQWHLE (132 aa)). An intrachain disulfide couples Cys486 to Cys505. N-linked (GlcNAc...) asparagine glycosylation is present at Asn508. Cystine bridges form between Cys529-Cys546 and Cys571-Cys589.

The protein belongs to the glycosyltransferase 2 family. GalNAc-T subfamily. As to quaternary structure, interacts with notch1. The cofactor is Mn(2+). Ca(2+) is required as a cofactor.

The protein resides in the golgi apparatus membrane. The enzyme catalyses L-seryl-[protein] + UDP-N-acetyl-alpha-D-galactosamine = a 3-O-[N-acetyl-alpha-D-galactosaminyl]-L-seryl-[protein] + UDP + H(+). The catalysed reaction is L-threonyl-[protein] + UDP-N-acetyl-alpha-D-galactosamine = a 3-O-[N-acetyl-alpha-D-galactosaminyl]-L-threonyl-[protein] + UDP + H(+). It participates in protein modification; protein glycosylation. In terms of biological role, polypeptide N-acetylgalactosaminyltransferase that catalyzes the initiation of protein O-linked glycosylation and is involved in left/right asymmetry by mediating O-glycosylation of NOTCH1. O-glycosylation of NOTCH1 promotes activation of NOTCH1, modulating the balance between motile and immotile (sensory) cilia at the left-right organiser (LRO). Polypeptide N-acetylgalactosaminyltransferases catalyze the transfer of an N-acetyl-D-galactosamine residue to a serine or threonine residue on the protein receptor. This is Polypeptide N-acetylgalactosaminyltransferase 11 (galnt11) from Xenopus tropicalis (Western clawed frog).